The chain runs to 184 residues: Peptidyl-tRNA hydrolase (184 aa).

Tyr14 lines the tRNA pocket. His19 (proton acceptor) is an active-site residue. TRNA-binding residues include Phe60 and Asn62.

Belongs to the PTH family. In terms of assembly, monomer.

It is found in the cytoplasm. The enzyme catalyses an N-acyl-L-alpha-aminoacyl-tRNA + H2O = an N-acyl-L-amino acid + a tRNA + H(+). In terms of biological role, hydrolyzes ribosome-free peptidyl-tRNAs (with 1 or more amino acids incorporated), which drop off the ribosome during protein synthesis, or as a result of ribosome stalling. Catalyzes the release of premature peptidyl moieties from peptidyl-tRNA molecules trapped in stalled 50S ribosomal subunits, and thus maintains levels of free tRNAs and 50S ribosomes. This is Peptidyl-tRNA hydrolase from Mesomycoplasma hyopneumoniae (strain 7448) (Mycoplasma hyopneumoniae).